The sequence spans 1105 residues: Protein phosphatase 1 regulatory subunit 26 (1105 aa).

Disordered stretches follow at residues 228 to 382 (LNDK…NKLA), 444 to 468 (QSTYVIPTEPPPPPPEPQCDSDSLV), 504 to 526 (TSPELGSQSSKLSLTHKRKAKAM), and 589 to 748 (LNRG…DSDD). Residues 275–285 (LLRKHASDSKL) show a composition bias toward basic and acidic residues. A compositionally biased stretch (low complexity) spans 306–317 (TKTSSPSPKSTP). Residues 359 to 368 (SPTSANSLTH) show a composition bias toward polar residues. Pro residues predominate over residues 451 to 460 (TEPPPPPPEP). Over residues 504 to 516 (TSPELGSQSSKLS) the composition is skewed to polar residues. Positions 602–612 (SYSSGDKSSSL) are enriched in low complexity. Positions 628–647 (SKRKYKKRPKDGKSQCKKRV) are enriched in basic residues. A compositionally biased stretch (basic and acidic residues) spans 686–701 (NSLEKSKKRREEKAVE). A compositionally biased stretch (polar residues) spans 705–715 (PSCSSSPQGNK). A compositionally biased stretch (basic and acidic residues) spans 733–742 (RALDDAHESS).

It localises to the nucleus. Its subcellular location is the nucleolus. Functionally, may inhibit phosphatase activity of protein phosphatase 1 (PP1) complexes. May positively regulate cell proliferation. This Xenopus laevis (African clawed frog) protein is Protein phosphatase 1 regulatory subunit 26 (ppp1r26).